The following is a 524-amino-acid chain: MAKFISAKEAAKLIPDGSTVGVAGMGLAGWPEEVAVAIADNFKETGHPCNLTMKQGSAMGDWRERGMTRLGLEGLVTKWSAAHIGSAFAMNDLVRAEKMACHCLPQGVIVNLWREIAAKRPGLITKVGLGTFVDPRLEGGKMNKVTTEDLVELIEFNGEEYLFYKSFKLDVAMLRGTTADENGNITFENEGPINEGLAVAQAAKNSGGIVIVQVEYQALKNTLKPKDVKIPGALVDYVVVATDKNACWQTEGVYYEPAFAGNLRKPLSAIPILPLTERKVMARRAAMELSKGDLVNLGVGIPSDVASIVSEAGYIEEITMTTEIGGFGGIPASLPNFGSSYNAEANIDHGSMFDLYDGGGIDVAVLGLAQADEAGNINVSKFTIPGLGDRLTGPGGFINITQSTQKVVFAGSFNAKCEVEISDGKLIIKKEGRGKKLLKEVEQVTFSGKYAAENGQEILYVTERCVFKLINGKMTVIEIAPGIDLQKDILDQMDFTPAISADLKEMDSGLFSEKWDGLDTIMGK.

The 5-glutamyl coenzyme A thioester intermediate role is filled by glutamate 323.

Belongs to the 3-oxoacid CoA-transferase family. In terms of assembly, homodimer.

It carries out the reaction hydrocaffeoyl-CoA + (E)-caffeate = 3-(3,4-dihydroxyphenyl)propanoate + (E)-caffeoyl-CoA. In terms of biological role, involved in caffeate respiration, which consists in the reduction of the C-C double bond of caffeate. CarA catalyzes an energy-saving CoA loop for caffeate activation in the steady state of caffeate respiration. It catalyzes the formation of caffeyl-CoA from caffeate with hydrocaffeyl-CoA as the CoA donor via a ping-pong mechanism. In addition to caffeate, the enzyme can utilize 4-coumarate or ferulate as CoA acceptor. Neither acetyl-CoA nor butyryl-CoA served as the CoA donor. The chain is Caffeate CoA-transferase from Acetobacterium woodii.